The sequence spans 326 residues: Glyoxylate/hydroxypyruvate reductase B (326 aa).

Catalysis depends on residues arginine 237 and glutamate 266. Histidine 285 acts as the Proton donor in catalysis.

The protein belongs to the D-isomer specific 2-hydroxyacid dehydrogenase family. GhrB subfamily. Homodimer.

Its subcellular location is the cytoplasm. It catalyses the reaction glycolate + NADP(+) = glyoxylate + NADPH + H(+). The enzyme catalyses (R)-glycerate + NAD(+) = 3-hydroxypyruvate + NADH + H(+). It carries out the reaction (R)-glycerate + NADP(+) = 3-hydroxypyruvate + NADPH + H(+). Functionally, catalyzes the NADPH-dependent reduction of glyoxylate and hydroxypyruvate into glycolate and glycerate, respectively. The chain is Glyoxylate/hydroxypyruvate reductase B from Yersinia enterocolitica serotype O:8 / biotype 1B (strain NCTC 13174 / 8081).